A 108-amino-acid chain; its full sequence is uncharacterized protein (108 aa).

Residues 15-37 form a helical membrane-spanning segment; that stretch reads SYYFYIFWNFFLPMFIVYRGFGL.

The protein resides in the membrane. This is an uncharacterized protein from Archaeoglobus fulgidus (strain ATCC 49558 / DSM 4304 / JCM 9628 / NBRC 100126 / VC-16).